Reading from the N-terminus, the 576-residue chain is K(+)/H(+) antiporter NhaP2 (576 aa).

A run of 13 helical transmembrane segments spans residues 6 to 26 (INSF…LSPM), 34 to 54 (ILLI…GGIL), 58 to 78 (YSTA…DGGM), 87 to 107 (VALW…TSIT), 109 to 129 (MMAA…GAIV), 163 to 183 (PMAV…DTEM), 185 to 205 (FSFM…LGLG), 219 to 239 (LADG…YAAS), 242 to 262 (LGGS…NKPT), 271 to 291 (VLDG…GLLL), 299 to 319 (ILIP…PVAV), 335 to 355 (WFIS…VFPM), and 359 to 379 (LPGA…SLLV). Residues 405–486 (SGVEIYPSSE…LEALSNLFSQ (82 aa)) form the RCK C-terminal domain.

The protein belongs to the monovalent cation:proton antiporter 1 (CPA1) transporter (TC 2.A.36) family. NhaP2 subfamily.

It is found in the cell inner membrane. It carries out the reaction K(+)(in) + H(+)(out) = K(+)(out) + H(+)(in). In terms of biological role, k(+)/H(+) antiporter that extrudes potassium in exchange for external protons and maintains the internal concentration of potassium under toxic levels. The protein is K(+)/H(+) antiporter NhaP2 of Shewanella baltica (strain OS195).